A 548-amino-acid chain; its full sequence is Glucose-6-phosphate isomerase (548 aa).

Catalysis depends on Glu-355, which acts as the Proton donor. Active-site residues include His-386 and Lys-514.

This sequence belongs to the GPI family.

The protein resides in the cytoplasm. The enzyme catalyses alpha-D-glucose 6-phosphate = beta-D-fructose 6-phosphate. Its pathway is carbohydrate biosynthesis; gluconeogenesis. It functions in the pathway carbohydrate degradation; glycolysis; D-glyceraldehyde 3-phosphate and glycerone phosphate from D-glucose: step 2/4. Its function is as follows. Catalyzes the reversible isomerization of glucose-6-phosphate to fructose-6-phosphate. The polypeptide is Glucose-6-phosphate isomerase (Photorhabdus laumondii subsp. laumondii (strain DSM 15139 / CIP 105565 / TT01) (Photorhabdus luminescens subsp. laumondii)).